A 1093-amino-acid polypeptide reads, in one-letter code: Protein AF-17 (1093 aa).

Residues 5-57 (VGGCCVCSDERGWAENPLVYCDGHACSVAVHQACYGIVQVPTGPWFCRKCESQ) form a PHD-type 1 zinc finger. The C2HC pre-PHD-type zinc finger occupies 62–95 (RVRCELCPHKDGALKRTDNGGWAHVVCALYIPEV). The PHD-type 2 zinc finger occupies 118–181 (KTCYICEEQG…KYCGYCKYHF (64 aa)). The tract at residues 185 to 500 (KTSRHSSGGG…GGPAAPSLPS (316 aa)) is disordered. Over residues 191–212 (SGGGGGGAGGGGGSMGGGGSGF) the composition is skewed to gly residues. Residues 231–255 (PTHHERGQKKSRKDKERLKQKHKKR) are compositionally biased toward basic residues. S258 is subject to Phosphoserine. The span at 258-268 (SPPSILTPPVV) shows a compositional bias: pro residues. Over residues 282-300 (SHHEASTQETSESSRESKG) the composition is skewed to basic and acidic residues. Residues 301-316 (KKSSSHSLSHKGKKLS) show a composition bias toward basic residues. The span at 317 to 340 (SGKGVSSFTSASSSSSSSSSSSGG) shows a compositional bias: low complexity. Over residues 345–354 (AVSSLQSSPD) the composition is skewed to polar residues. A compositionally biased stretch (pro residues) spans 374-388 (APAPSAPPSPSAPEP). Phosphoserine is present on residues S378 and S423. A compositionally biased stretch (low complexity) spans 410–425 (STTTSSSGRARAPSPG). T451 is modified (phosphothreonine). Residues 465 to 484 (EKKHKASKRSRHGPGRPKGS) are compositionally biased toward basic residues. The segment at 729-764 (LQKENQRLQEQILSLTAKKERLQILNVQLSVPFPAL) is leucine-zipper. Disordered stretches follow at residues 775–871 (VPGP…RAPG) and 1060–1093 (QTNPFLSLSGAEGSGGGPKGGTADKGASANQEKG). Positions 787–796 (SSDSLSTSKS) are enriched in low complexity. Over residues 804-813 (GLDNSLSTSS) the composition is skewed to polar residues. 2 stretches are compositionally biased toward low complexity: residues 818-832 (SGCPSRSSSSLSFHS) and 839-853 (LLQQSPATLPLALPG).

As to quaternary structure, interacts with histone H3; interaction is necessary for MLLT6 binding to nucleosomes; interaction is inhibited by histone H3 'Lys-27' methylations (H3K27me1, H3K27me2 and H3K27me3).

It is found in the nucleus. The protein is Protein AF-17 (MLLT6) of Homo sapiens (Human).